Here is a 178-residue protein sequence, read N- to C-terminus: MAAELLEQPVLGSRRLSNILVALMVTIGGIGFLFASLSSYLGRDLLPLGHPAGLVFVPQGLIMGLYSLAAALLASYLWAVITINVGSGSNRFDRSAGVVTISRRGFRQPISVEIPIKDIQAVKVEVRDGFNTRRRVSLRVRGRRDMPLTRVGEPLPLAQLEQDGAELARFLGVNLEGL.

The next 2 membrane-spanning stretches (helical) occupy residues 19–39 and 61–81; these read ILVA…SLSS and LIMG…WAVI.

The protein belongs to the Ycf4 family.

It is found in the cellular thylakoid membrane. Functionally, seems to be required for the assembly of the photosystem I complex. The sequence is that of Photosystem I assembly protein Ycf4 from Synechococcus sp. (strain CC9311).